The following is a 25-amino-acid chain: Insulin mimetic protein (25 aa).

Residues 1–25 (TKDPELKQCKKQQKKQQQYDDDDKK) are disordered.

In terms of processing, glycosylated. In terms of tissue distribution, expressed in seed.

The chain is Insulin mimetic protein from Cnidoscolus quercifolius.